We begin with the raw amino-acid sequence, 209 residues long: Mitochondrial import inner membrane translocase subunit Tim23 (209 aa).

The next 3 helical transmembrane spans lie at 73 to 93, 125 to 145, and 172 to 194; these read FELAFFTIGGCCMTVAAFGAM, ALWANTLGSLALLYSAFGVII, and GGLRGIARGGLTGLTLTSLYALY.

The protein belongs to the Tim17/Tim22/Tim23 family. As to quaternary structure, component of the TIM23 complex at least composed of TIMM23, TIMM17 (TIMM17A or TIMM17B) and TIMM50; within this complex, directly interacts with TIMM50. The complex interacts with the TIMM44 component of the PAM complex and with DNAJC15. Upon mitochondrial depolarization, interacts with PINK1; the interaction is required for PINK1 accumulation at the outer mitochondrial membrane, kinase activation by autophosphorylation and PRKN recruitement to mitochondria.

The protein resides in the mitochondrion inner membrane. Its function is as follows. Essential component of the TIM23 complex, a complex that mediates the translocation of transit peptide-containing proteins across the mitochondrial inner membrane. Has a role in the activation of stress-induced mitophagy by protecting PINK1 from OMA1-mediated degradation and facilitating its accumulation at the outer mitochondrial membrane in response to depolarization. This is Mitochondrial import inner membrane translocase subunit Tim23 (TIMM23) from Pongo abelii (Sumatran orangutan).